The following is an 84-amino-acid chain: U8-theraphotoxin-Hhn1d (84 aa).

Positions 1–21 are cleaved as a signal peptide; the sequence is MKVVLIVCLVWVMAMMELVSC. Cystine bridges form between cysteine 23-cysteine 35, cysteine 29-cysteine 44, cysteine 34-cysteine 67, cysteine 54-cysteine 75, and cysteine 69-cysteine 81.

This sequence belongs to the AVIT (prokineticin) family. As to expression, expressed by the venom gland.

Its subcellular location is the secreted. This chain is U8-theraphotoxin-Hhn1d, found in Cyriopagopus hainanus (Chinese bird spider).